The sequence spans 824 residues: Leucine--tRNA ligase (824 aa).

The 'HIGH' region signature appears at 42-52 (PYPSGRIHMGH). A 'KMSKS' region motif is present at residues 581 to 585 (KMSKS). Lysine 584 is a binding site for ATP.

It belongs to the class-I aminoacyl-tRNA synthetase family.

The protein resides in the cytoplasm. The catalysed reaction is tRNA(Leu) + L-leucine + ATP = L-leucyl-tRNA(Leu) + AMP + diphosphate. The polypeptide is Leucine--tRNA ligase (Geotalea uraniireducens (strain Rf4) (Geobacter uraniireducens)).